The following is a 146-amino-acid chain: Ribonuclease H (146 aa).

Positions 1 to 143 (MKKQVTIYTD…CDQLAREAIK (143 aa)) constitute an RNase H type-1 domain. Positions 10, 48, 70, and 135 each coordinate Mg(2+).

This sequence belongs to the RNase H family. Monomer. Mg(2+) is required as a cofactor.

The protein localises to the cytoplasm. It catalyses the reaction Endonucleolytic cleavage to 5'-phosphomonoester.. In terms of biological role, endonuclease that specifically degrades the RNA of RNA-DNA hybrids. In Chlorobium chlorochromatii (strain CaD3), this protein is Ribonuclease H.